The chain runs to 235 residues: MRFDILTLFPEFFTSPLQTSLLGKALANEVAEVHLTNPRDFTTDKHHRVDDEVYGGGVGMLMKPEPIFAAVESLPCLPRRQIVLFTPQGRPMDQPLFHELANHYDQLVMICGHYEGVDERVAEHLVTQELSLGDFVLTCGEIPALTLLNGVIRLRPGTVGKVESLKKESFETELLDYPQYTRPAEFRGWQVPSVLRSGNHALIERWRQEQQIQRTRDRRPDLYQKWLKKSDTSDP.

Residues G112 and 132-137 (LGDFVL) each bind S-adenosyl-L-methionine.

It belongs to the RNA methyltransferase TrmD family. Homodimer.

Its subcellular location is the cytoplasm. It carries out the reaction guanosine(37) in tRNA + S-adenosyl-L-methionine = N(1)-methylguanosine(37) in tRNA + S-adenosyl-L-homocysteine + H(+). Specifically methylates guanosine-37 in various tRNAs. The sequence is that of tRNA (guanine-N(1)-)-methyltransferase from Acaryochloris marina (strain MBIC 11017).